The following is a 96-amino-acid chain: Nucleoid-associated protein DR_0199 (96 aa).

It belongs to the YbaB/EbfC family. In terms of assembly, homodimer.

It is found in the cytoplasm. The protein resides in the nucleoid. Binds to DNA and alters its conformation. May be involved in regulation of gene expression, nucleoid organization and DNA protection. The protein is Nucleoid-associated protein DR_0199 of Deinococcus radiodurans (strain ATCC 13939 / DSM 20539 / JCM 16871 / CCUG 27074 / LMG 4051 / NBRC 15346 / NCIMB 9279 / VKM B-1422 / R1).